The sequence spans 146 residues: Extracellular globin-2A (146 aa).

Positions 4–146 (HCGPLQRLKV…EVIYPGIKHD (143 aa)) constitute a Globin domain. The cysteines at positions 5 and 134 are disulfide-linked. Position 97 (His97) interacts with heme b.

The protein belongs to the globin family. As to quaternary structure, disulfide bonded trimer of chains IIA, IIB, and IIC.

The protein is Extracellular globin-2A of Tylorrhynchus heterochetus (Japanese palolo worm).